A 608-amino-acid polypeptide reads, in one-letter code: AAA ATPase forming ring-shaped complexes (608 aa).

Residues 45 to 79 (AQEYDAVLRRLSAAEATRDNMSRQIRGAGEKNRKL) adopt a coiled-coil conformation. 302–307 (GNGKTM) provides a ligand contact to ATP.

The protein belongs to the AAA ATPase family. In terms of assembly, homohexamer. Assembles into a hexameric ring structure.

In Rothia mucilaginosa (strain DY-18) (Stomatococcus mucilaginosus), this protein is AAA ATPase forming ring-shaped complexes.